Here is a 259-residue protein sequence, read N- to C-terminus: UPF0246 protein PFLU_0992 (259 aa).

The protein belongs to the UPF0246 family.

This is UPF0246 protein PFLU_0992 from Pseudomonas fluorescens (strain SBW25).